We begin with the raw amino-acid sequence, 151 residues long: Dehydrin Rab16D (151 aa).

Residues 1-138 (MEYQGQHGGH…TADAGGEKKG (138 aa)) form a disordered region. A compositionally biased stretch (basic and acidic residues) spans 39 to 51 (EPAREDKKTDGVL). 2 stretches are compositionally biased toward low complexity: residues 90–105 (GNNQ…TTTG) and 117–132 (IATG…TADA).

It belongs to the plant dehydrin family.

The chain is Dehydrin Rab16D (RAB16D) from Oryza sativa subsp. indica (Rice).